We begin with the raw amino-acid sequence, 131 residues long: uncharacterized protein (131 aa).

The disordered stretch occupies residues 60 to 100 (GRHTLSQVPNKGHEKASAVQLPEKQGTDQSRRGPTSAVTKA). Over residues 91–100 (RGPTSAVTKA) the composition is skewed to polar residues.

This is an uncharacterized protein from Homo sapiens (Human).